The chain runs to 299 residues: ATP phosphoribosyltransferase (299 aa).

The protein belongs to the ATP phosphoribosyltransferase family. Long subfamily. Equilibrium between an active dimeric form, an inactive hexameric form and higher aggregates. Interconversion between the various forms is largely reversible and is influenced by the natural substrates and inhibitors of the enzyme. Mg(2+) is required as a cofactor.

It is found in the cytoplasm. It catalyses the reaction 1-(5-phospho-beta-D-ribosyl)-ATP + diphosphate = 5-phospho-alpha-D-ribose 1-diphosphate + ATP. Its pathway is amino-acid biosynthesis; L-histidine biosynthesis; L-histidine from 5-phospho-alpha-D-ribose 1-diphosphate: step 1/9. With respect to regulation, feedback inhibited by histidine. In terms of biological role, catalyzes the condensation of ATP and 5-phosphoribose 1-diphosphate to form N'-(5'-phosphoribosyl)-ATP (PR-ATP). Has a crucial role in the pathway because the rate of histidine biosynthesis seems to be controlled primarily by regulation of HisG enzymatic activity. The chain is ATP phosphoribosyltransferase from Buchnera aphidicola subsp. Diuraphis noxia.